Reading from the N-terminus, the 473-residue chain is Ribosomal RNA small subunit methyltransferase F (473 aa).

S-adenosyl-L-methionine-binding positions include 124–130 (ASAPGSK), E148, D175, and D193. C246 functions as the Nucleophile in the catalytic mechanism.

It belongs to the class I-like SAM-binding methyltransferase superfamily. RsmB/NOP family.

The protein localises to the cytoplasm. The enzyme catalyses cytidine(1407) in 16S rRNA + S-adenosyl-L-methionine = 5-methylcytidine(1407) in 16S rRNA + S-adenosyl-L-homocysteine + H(+). Functionally, specifically methylates the cytosine at position 1407 (m5C1407) of 16S rRNA. In Aliivibrio fischeri (strain ATCC 700601 / ES114) (Vibrio fischeri), this protein is Ribosomal RNA small subunit methyltransferase F.